The following is a 627-amino-acid chain: Chaperone protein HtpG (627 aa).

The tract at residues 1–339 (MKGQETRGFQ…SNDLPLNVSR (339 aa)) is a; substrate-binding. The b stretch occupies residues 340–555 (EILQDSRVTQ…ADEMSTQMAK (216 aa)). A c region spans residues 556–627 (LFAAAGQQAP…IRRMNQLLSA (72 aa)).

Belongs to the heat shock protein 90 family. As to quaternary structure, homodimer.

It localises to the cytoplasm. Its function is as follows. Molecular chaperone. Has ATPase activity. The chain is Chaperone protein HtpG from Pectobacterium atrosepticum (strain SCRI 1043 / ATCC BAA-672) (Erwinia carotovora subsp. atroseptica).